Here is a 416-residue protein sequence, read N- to C-terminus: Enterobactin exporter EntS (416 aa).

The Cytoplasmic segment spans residues 1–21; sequence MNKQSWLLNLSLLKTHPAFRA. Residues 22–42 traverse the membrane as a helical segment; it reads VFLARFISIVSLGLLGVAVPV. The Periplasmic portion of the chain corresponds to 43 to 55; it reads QIQMMTHSTWQVG. Residues 56–76 form a helical membrane-spanning segment; that stretch reads LSVTLTGGAMFVGLMVGGVLA. Over 77–83 the chain is Cytoplasmic; that stretch reads DRYERKK. The chain crosses the membrane as a helical span at residues 84-104; it reads VILLARGTCGIGFIGLCLNAL. The Periplasmic segment spans residues 105–109; it reads LPEPS. Residues 110 to 130 form a helical membrane-spanning segment; that stretch reads LLAIYLLGLWDGFFASLGVTA. At 131–156 the chain is on the cytoplasmic side; sequence LLAATPALVGRENLMQAGAITMLTVR. A helical transmembrane segment spans residues 157-177; the sequence is LGSVISPMIGGLLLATGGVAW. Residue asparagine 178 is a topological domain, periplasmic. Residues 179 to 199 form a helical membrane-spanning segment; it reads YGLAAAGTFITLLPLLSLPAL. Residues 200-218 are Cytoplasmic-facing; the sequence is PPPPQPREHPLKSLLAGFR. Residues 219-239 form a helical membrane-spanning segment; that stretch reads FLLASPLVGGIALLGGLLTMA. The Periplasmic segment spans residues 240-256; sequence SAVRVLYPALADNWQMS. A helical membrane pass occupies residues 257 to 277; the sequence is AAQIGFLYAAIPLGAAIGALT. Residues 278–287 lie on the Cytoplasmic side of the membrane; the sequence is SGKLAHSARP. The chain crosses the membrane as a helical span at residues 288–307; it reads GLLMLLSTLGSFLAIGLFGL. Topologically, residues 308-313 are periplasmic; that stretch reads MPMWIL. A helical transmembrane segment spans residues 314 to 336; sequence GVVCLALFGWLSAVSSLLQYTML. The Cytoplasmic portion of the chain corresponds to 337–356; the sequence is QTQTPEAMLGRINGLWTAQN. The chain crosses the membrane as a helical span at residues 357–377; sequence VTGDAIGAALLGGLGAMMTPV. Alanine 378 is a topological domain (periplasmic). The chain crosses the membrane as a helical span at residues 379 to 399; it reads SASASGFGLLIIGVLLLLVLV. Residues 400-416 are Cytoplasmic-facing; sequence ELRHFRQTPPQVTASDS.

This sequence belongs to the major facilitator superfamily. EntS (TC 2.A.1.38) family.

The protein resides in the cell inner membrane. Functionally, component of an export pathway for enterobactin. This is Enterobactin exporter EntS from Escherichia coli (strain K12 / MC4100 / BW2952).